The primary structure comprises 458 residues: Retinoic acid receptor alpha (458 aa).

Positions 1–87 are modulating; it reads MSSKDNTCPP…PPPLPRIYKP (87 aa). A disordered region spans residues 39–78; the sequence is GGLPGVQHQPPLSGYSTPSPATIETQSTSSEEIVPSPPTP. Residues 52 to 69 are compositionally biased toward polar residues; that stretch reads GYSTPSPATIETQSTSSE. 2 NR C4-type zinc fingers span residues 88–108 and 124–148; these read CFVC…CEGC and CHRD…LQKC. Positions 88 to 153 form a DNA-binding region, nuclear receptor; the sequence is CFVCQDKSSG…RLQKCFEVGM (66 aa). A hinge region spans residues 154-182; it reads SKESVRNDRNKKKKESPKPEAIESYILSP. In terms of domain architecture, NR LBD spans 183-417; it reads ETQDLIEKVQ…LIQEMLENSE (235 aa). The 9aaTAD signature appears at 407 to 415; the sequence is PLIQEMLEN. The tract at residues 419–458 is disordered; it reads LDTLGGGASSDAPVTPVAPGSCSPSLSPSSTHSSPSTHSP. Low complexity predominate over residues 439–458; that stretch reads SCSPSLSPSSTHSSPSTHSP.

This sequence belongs to the nuclear hormone receptor family. NR1 subfamily. Heterodimer; with an rxr molecule. Binds DNA preferentially as a rar/rxr heterodimer.

Its subcellular location is the nucleus. Its function is as follows. Receptor for retinoic acid. Retinoic acid receptors bind as heterodimers to their target response elements in response to their ligands, all-trans or 9-cis retinoic acid, and regulate gene expression in various biological processes. The rar/rxr heterodimers bind to the retinoic acid response elements (RARE) composed of tandem 5'-AGGTCA-3' sites known as DR1-DR5. Required for primary neurogenesis and for anteroposterior neural patterning. The polypeptide is Retinoic acid receptor alpha (rara) (Xenopus laevis (African clawed frog)).